A 286-amino-acid chain; its full sequence is MNQSFISDILYADIESKAKELTVNSNNTVQPVALMRLGVFVPKPSKSKGESKEIDATKAFSQLEIAKAEGYDDIKITGPRLDMDTDFKTWIGVIYAFSKYGLSSNTIQLSFQEFAKACGFPSKRLDAKLRLTIHESLGRLRNKGIAFKRGKDAKGGYQTGLLKVGRFDADLDLIELEADSKLWELFQLDYRVLLQHHALRALPKKEAAQAIYTFIESLPQNPLPLSFARIRERLALQSAVGEQNRIIKKAIEQLKTIGYLDCSIEKKGRESFVIVHSRNPKLKLPE.

The protein belongs to the initiator RepB protein family.

Its function is as follows. RepA is essential for origin function, autoregulates its own synthesis from the promoter, and, when overproduced, blocks origin function. The sequence is that of Replication protein RepA (repA) from Escherichia coli.